Consider the following 547-residue polypeptide: Chaperonin GroEL (547 aa).

ATP contacts are provided by residues 30 to 33 (TLGP), Lys-51, 87 to 91 (DGTTT), Gly-415, 479 to 481 (NAA), and Asp-495.

The protein belongs to the chaperonin (HSP60) family. Forms a cylinder of 14 subunits composed of two heptameric rings stacked back-to-back. Interacts with the co-chaperonin GroES.

Its subcellular location is the cytoplasm. The enzyme catalyses ATP + H2O + a folded polypeptide = ADP + phosphate + an unfolded polypeptide.. Functionally, together with its co-chaperonin GroES, plays an essential role in assisting protein folding. The GroEL-GroES system forms a nano-cage that allows encapsulation of the non-native substrate proteins and provides a physical environment optimized to promote and accelerate protein folding. The protein is Chaperonin GroEL of Cupriavidus metallidurans (strain ATCC 43123 / DSM 2839 / NBRC 102507 / CH34) (Ralstonia metallidurans).